A 433-amino-acid polypeptide reads, in one-letter code: Tol-Pal system protein TolB (433 aa).

Residues 1–21 form the signal peptide; sequence MIKRLRGLLVMLCCVAGMAVA.

It belongs to the TolB family. The Tol-Pal system is composed of five core proteins: the inner membrane proteins TolA, TolQ and TolR, the periplasmic protein TolB and the outer membrane protein Pal. They form a network linking the inner and outer membranes and the peptidoglycan layer.

It is found in the periplasm. Part of the Tol-Pal system, which plays a role in outer membrane invagination during cell division and is important for maintaining outer membrane integrity. This is Tol-Pal system protein TolB from Pseudomonas putida (strain ATCC 47054 / DSM 6125 / CFBP 8728 / NCIMB 11950 / KT2440).